Here is a 393-residue protein sequence, read N- to C-terminus: NAD(P)H-quinone oxidoreductase subunit H, chloroplastic (393 aa).

It belongs to the complex I 49 kDa subunit family. In terms of assembly, NDH is composed of at least 16 different subunits, 5 of which are encoded in the nucleus.

The protein resides in the plastid. It is found in the chloroplast thylakoid membrane. The enzyme catalyses a plastoquinone + NADH + (n+1) H(+)(in) = a plastoquinol + NAD(+) + n H(+)(out). It catalyses the reaction a plastoquinone + NADPH + (n+1) H(+)(in) = a plastoquinol + NADP(+) + n H(+)(out). Functionally, NDH shuttles electrons from NAD(P)H:plastoquinone, via FMN and iron-sulfur (Fe-S) centers, to quinones in the photosynthetic chain and possibly in a chloroplast respiratory chain. The immediate electron acceptor for the enzyme in this species is believed to be plastoquinone. Couples the redox reaction to proton translocation, and thus conserves the redox energy in a proton gradient. The chain is NAD(P)H-quinone oxidoreductase subunit H, chloroplastic from Ranunculus macranthus (Large buttercup).